Consider the following 407-residue polypeptide: Peptidase T (407 aa).

Histidine 82 lines the Zn(2+) pocket. Aspartate 84 is a catalytic residue. Position 143 (aspartate 143) interacts with Zn(2+). The active-site Proton acceptor is glutamate 177. Zn(2+)-binding residues include glutamate 178, aspartate 200, and histidine 382.

It belongs to the peptidase M20B family. Zn(2+) is required as a cofactor.

It is found in the cytoplasm. It carries out the reaction Release of the N-terminal residue from a tripeptide.. Its function is as follows. Cleaves the N-terminal amino acid of tripeptides. This is Peptidase T from Streptococcus pyogenes serotype M1.